A 303-amino-acid polypeptide reads, in one-letter code: UDP-N-acetylenolpyruvoylglucosamine reductase (303 aa).

The 168-residue stretch at 29-196 folds into the FAD-binding PCMH-type domain; that stretch reads KIGGPADILI…LEAVLQLEQK (168 aa). Arginine 174 is a catalytic residue. The active-site Proton donor is serine 225. The active site involves glutamate 295.

It belongs to the MurB family. FAD is required as a cofactor.

The protein localises to the cytoplasm. The enzyme catalyses UDP-N-acetyl-alpha-D-muramate + NADP(+) = UDP-N-acetyl-3-O-(1-carboxyvinyl)-alpha-D-glucosamine + NADPH + H(+). Its pathway is cell wall biogenesis; peptidoglycan biosynthesis. Its function is as follows. Cell wall formation. The protein is UDP-N-acetylenolpyruvoylglucosamine reductase of Bacillus velezensis (strain DSM 23117 / BGSC 10A6 / LMG 26770 / FZB42) (Bacillus amyloliquefaciens subsp. plantarum).